Consider the following 202-residue polypeptide: Probable pathogenesis-related protein CaO19.2336 (202 aa).

An N-terminal signal peptide occupies residues 1-20 (MKTLLFIYLQLLLLLSIIIG). Asn-58 and Asn-152 each carry an N-linked (GlcNAc...) asparagine glycan. An SCP domain is found at 66–179 (LKEHNNKRKL…LNALYIVCSY (114 aa)).

It belongs to the CRISP family.

Its subcellular location is the secreted. Functionally, secreted protein that acts as a virulence factor during infections. This Candida albicans (strain SC5314 / ATCC MYA-2876) (Yeast) protein is Probable pathogenesis-related protein CaO19.2336.